The following is a 548-amino-acid chain: Membrane protein insertase YidC (548 aa).

5 helical membrane-spanning segments follow: residues 6-26 (NLILIGLLFVSFLLWQQWESD), 349-369 (TVFQGFVHNWGVAIIMLTLLV), 424-444 (LGGCLPILVQMPIFIALYWAL), 455-475 (FALWITDLSVKDPFFVLPILM), and 503-523 (PIIFTFMFLWFPAGLTLYWLV).

Belongs to the OXA1/ALB3/YidC family. Type 1 subfamily. As to quaternary structure, interacts with the Sec translocase complex via SecD. Specifically interacts with transmembrane segments of nascent integral membrane proteins during membrane integration.

It localises to the cell inner membrane. Its function is as follows. Required for the insertion and/or proper folding and/or complex formation of integral membrane proteins into the membrane. Involved in integration of membrane proteins that insert both dependently and independently of the Sec translocase complex, as well as at least some lipoproteins. Aids folding of multispanning membrane proteins. This is Membrane protein insertase YidC from Aeromonas salmonicida (strain A449).